The sequence spans 216 residues: Cytidylate kinase (216 aa).

Residue 7-15 coordinates ATP; sequence GPSGTGKST.

Belongs to the cytidylate kinase family. Type 1 subfamily.

The protein resides in the cytoplasm. It catalyses the reaction CMP + ATP = CDP + ADP. It carries out the reaction dCMP + ATP = dCDP + ADP. This Chlamydia pneumoniae (Chlamydophila pneumoniae) protein is Cytidylate kinase.